Consider the following 453-residue polypeptide: Pup--protein ligase (453 aa).

Glu9 serves as a coordination point for Mg(2+). Arg53 is a binding site for ATP. Tyr55 provides a ligand contact to Mg(2+). The active-site Proton acceptor is Asp57. Residue Glu63 participates in Mg(2+) binding. ATP is bound by residues Thr66 and Trp420.

Belongs to the Pup ligase/Pup deamidase family. Pup-conjugating enzyme subfamily.

The enzyme catalyses ATP + [prokaryotic ubiquitin-like protein]-L-glutamate + [protein]-L-lysine = ADP + phosphate + N(6)-([prokaryotic ubiquitin-like protein]-gamma-L-glutamyl)-[protein]-L-lysine.. The protein operates within protein degradation; proteasomal Pup-dependent pathway. It participates in protein modification; protein pupylation. In terms of biological role, catalyzes the covalent attachment of the prokaryotic ubiquitin-like protein modifier Pup to the proteasomal substrate proteins, thereby targeting them for proteasomal degradation. This tagging system is termed pupylation. The ligation reaction involves the side-chain carboxylate of the C-terminal glutamate of Pup and the side-chain amino group of a substrate lysine. The sequence is that of Pup--protein ligase from Streptomyces griseus subsp. griseus (strain JCM 4626 / CBS 651.72 / NBRC 13350 / KCC S-0626 / ISP 5235).